The following is a 176-amino-acid chain: Small ribosomal subunit protein uS5 (176 aa).

Positions 11–74 constitute an S5 DRBM domain; sequence LSEVLVDVNR…QAAKKRMMKV (64 aa).

Belongs to the universal ribosomal protein uS5 family. In terms of assembly, part of the 30S ribosomal subunit. Contacts proteins S4 and S8.

With S4 and S12 plays an important role in translational accuracy. In terms of biological role, located at the back of the 30S subunit body where it stabilizes the conformation of the head with respect to the body. The polypeptide is Small ribosomal subunit protein uS5 (Rickettsia peacockii (strain Rustic)).